The following is a 485-amino-acid chain: Probable outer membrane usher protein LpfC' (485 aa).

It belongs to the fimbrial export usher family.

The protein resides in the cell outer membrane. In terms of biological role, part of the lpfABCC'DE fimbrial operon. LP fimbriae may participate in the interaction with eukaryotic cells by assisting in microcolony formation. Could be involved in the export and assembly of the fimbrial subunits across the outer membrane. The chain is Probable outer membrane usher protein LpfC' (lpfC') from Escherichia coli O157:H7.